A 578-amino-acid polypeptide reads, in one-letter code: uncharacterized protein (578 aa).

This is an uncharacterized protein from Eikenella corrodens.